The sequence spans 998 residues: Type II restriction enzyme and methyltransferase RM.Eco57I (998 aa).

The protein in the C-terminal section; belongs to the N(4)/N(6)-methyltransferase family. In terms of assembly, monomer.

It carries out the reaction Endonucleolytic cleavage of DNA to give specific double-stranded fragments with terminal 5'-phosphates.. It catalyses the reaction a 2'-deoxyadenosine in DNA + S-adenosyl-L-methionine = an N(6)-methyl-2'-deoxyadenosine in DNA + S-adenosyl-L-homocysteine + H(+). With respect to regulation, mg(2+) is absolutely required for DNA restriction. Its function is as follows. An E, G and S subtype restriction enzyme that recognizes the (non-palindromic) double-stranded sequence 5'-CTGAAG-3' and cleaves respectively 22 bases after C-1 and 14 bases before C'-1; cleavage of lambda DNA is never complete. Also acts as a methylase that causes specific methylation on A-5 in 5'-CTGAAG-3', the other strand is methylated by the M.Eco57I methylase. The protein is Type II restriction enzyme and methyltransferase RM.Eco57I of Escherichia coli.